The sequence spans 209 residues: Ribonuclease HII (209 aa).

In terms of domain architecture, RNase H type-2 spans 19–209; it reads CIIVGVDEVG…LPGITKLYSK (191 aa). Residues D25, E26, and D118 each coordinate a divalent metal cation.

Belongs to the RNase HII family. It depends on Mn(2+) as a cofactor. The cofactor is Mg(2+).

The protein resides in the cytoplasm. It catalyses the reaction Endonucleolytic cleavage to 5'-phosphomonoester.. In terms of biological role, endonuclease that specifically degrades the RNA of RNA-DNA hybrids. The polypeptide is Ribonuclease HII (Ehrlichia canis (strain Jake)).